Here is a 301-residue protein sequence, read N- to C-terminus: Dihydroorotate dehydrogenase B (NAD(+)), catalytic subunit (301 aa).

FMN-binding positions include S21 and 45–46 (KS). Substrate-binding positions include K45, 69–73 (NAVGL), and N125. N125 serves as a coordination point for FMN. Residue C128 is the Nucleophile of the active site. K163 and I187 together coordinate FMN. Substrate is bound at residue 188-189 (NT). FMN-binding positions include G213, 239–240 (GG), and 261–262 (GT).

This sequence belongs to the dihydroorotate dehydrogenase family. Type 1 subfamily. Heterotetramer of 2 PyrK and 2 PyrD type B subunits. It depends on FMN as a cofactor.

Its subcellular location is the cytoplasm. It carries out the reaction (S)-dihydroorotate + NAD(+) = orotate + NADH + H(+). Its pathway is pyrimidine metabolism; UMP biosynthesis via de novo pathway; orotate from (S)-dihydroorotate (NAD(+) route): step 1/1. Catalyzes the conversion of dihydroorotate to orotate with NAD(+) as electron acceptor. This chain is Dihydroorotate dehydrogenase B (NAD(+)), catalytic subunit (pyrD), found in Thermoplasma volcanium (strain ATCC 51530 / DSM 4299 / JCM 9571 / NBRC 15438 / GSS1).